Consider the following 126-residue polypeptide: Small ribosomal subunit protein uS13 (126 aa).

Residues 92–126 (RMGLPVRGQRTRTNARTRRGGRRTVAGKKKAPAKK) form a disordered region. A compositionally biased stretch (basic residues) spans 100-126 (QRTRTNARTRRGGRRTVAGKKKAPAKK).

The protein belongs to the universal ribosomal protein uS13 family. In terms of assembly, part of the 30S ribosomal subunit. Forms a loose heterodimer with protein S19. Forms two bridges to the 50S subunit in the 70S ribosome.

In terms of biological role, located at the top of the head of the 30S subunit, it contacts several helices of the 16S rRNA. In the 70S ribosome it contacts the 23S rRNA (bridge B1a) and protein L5 of the 50S subunit (bridge B1b), connecting the 2 subunits; these bridges are implicated in subunit movement. Contacts the tRNAs in the A and P-sites. The chain is Small ribosomal subunit protein uS13 from Cyanothece sp. (strain PCC 7425 / ATCC 29141).